Consider the following 256-residue polypeptide: Imidazole glycerol phosphate synthase subunit HisF (256 aa).

Residues D12 and D131 contribute to the active site.

The protein belongs to the HisA/HisF family. In terms of assembly, heterodimer of HisH and HisF.

The protein localises to the cytoplasm. It carries out the reaction 5-[(5-phospho-1-deoxy-D-ribulos-1-ylimino)methylamino]-1-(5-phospho-beta-D-ribosyl)imidazole-4-carboxamide + L-glutamine = D-erythro-1-(imidazol-4-yl)glycerol 3-phosphate + 5-amino-1-(5-phospho-beta-D-ribosyl)imidazole-4-carboxamide + L-glutamate + H(+). Its pathway is amino-acid biosynthesis; L-histidine biosynthesis; L-histidine from 5-phospho-alpha-D-ribose 1-diphosphate: step 5/9. Its function is as follows. IGPS catalyzes the conversion of PRFAR and glutamine to IGP, AICAR and glutamate. The HisF subunit catalyzes the cyclization activity that produces IGP and AICAR from PRFAR using the ammonia provided by the HisH subunit. The polypeptide is Imidazole glycerol phosphate synthase subunit HisF (Beutenbergia cavernae (strain ATCC BAA-8 / DSM 12333 / CCUG 43141 / JCM 11478 / NBRC 16432 / NCIMB 13614 / HKI 0122)).